A 198-amino-acid chain; its full sequence is Segregation and condensation protein B (198 aa).

The interval 169–198 (LADPAAEEPDQNEMDLFFDRFNQSKEQEEE) is disordered.

Belongs to the ScpB family. As to quaternary structure, homodimer. Homodimerization may be required to stabilize the binding of ScpA to the Smc head domains. Component of a cohesin-like complex composed of ScpA, ScpB and the Smc homodimer, in which ScpA and ScpB bind to the head domain of Smc. The presence of the three proteins is required for the association of the complex with DNA.

Its subcellular location is the cytoplasm. In terms of biological role, participates in chromosomal partition during cell division. May act via the formation of a condensin-like complex containing Smc and ScpA that pull DNA away from mid-cell into both cell halves. The protein is Segregation and condensation protein B of Listeria monocytogenes serotype 4a (strain HCC23).